A 1287-amino-acid chain; its full sequence is Cell adhesion molecule-related/down-regulated by oncogenes (1287 aa).

A signal peptide spans Met1–Ser25. Residues Asp26 to Asp963 lie on the Extracellular side of the membrane. Ig-like C2-type domains are found at residues Pro29–Ser114, Asp120–Glu204, Pro225–Thr303, Glu310–Glu396, and Pro405–Met516. A disulfide bridge links Cys50 with Cys97. 7 N-linked (GlcNAc...) asparagine glycosylation sites follow: Asn88, Asn100, Asn180, Asn287, Asn294, Asn342, and Asn427. Disulfide bonds link Cys141–Cys191 and Cys243–Cys290. 2 disulfide bridges follow: Cys333-Cys380 and Cys426-Cys500. A disordered region spans residues Leu531 to Ser553. The segment covering Asn537–Ser546 has biased composition (basic and acidic residues). Asn570 is a glycosylation site (N-linked (GlcNAc...) asparagine). 3 consecutive Fibronectin type-III domains span residues Ala579–Lys677, Ala723–Arg821, and Pro826–Lys926. N-linked (GlcNAc...) asparagine glycosylation is present at Asn873. The interval Glu933–Ala955 is disordered. Residues Met964 to Ile984 traverse the membrane as a helical segment. At Ala985–Thr1287 the chain is on the cytoplasmic side. The tract at residues Ser1268–Thr1287 is disordered.

As to quaternary structure, part of a complex that contains BOC, CDON, NEO1, cadherins and CTNNB1. Interacts with NTN3. Interacts with PTCH1. Interacts with GAS1. Interacts with DHH, IHH and SHH. Post-translationally, N-glycosylated.

The protein resides in the cell membrane. Its function is as follows. Component of a cell-surface receptor complex that mediates cell-cell interactions between muscle precursor cells. Promotes differentiation of myogenic cells. This Homo sapiens (Human) protein is Cell adhesion molecule-related/down-regulated by oncogenes (CDON).